The sequence spans 523 residues: Sensory neuron membrane protein 1 (523 aa).

Residues 1–10 (MRLARGIKYA) are Cytoplasmic-facing. Residues 11–31 (VIGAGVALFGVLFGWVMFPAI) traverse the membrane as a helical segment. Topologically, residues 32–458 (LKSQLKKEMA…NQLFIPKRIV (427 aa)) are extracellular. 2 N-linked (GlcNAc...) asparagine glycosylation sites follow: asparagine 67 and asparagine 229. Intrachain disulfides connect cysteine 268–cysteine 333, cysteine 297–cysteine 352, and cysteine 335–cysteine 341. The N-linked (GlcNAc...) asparagine glycan is linked to asparagine 440. The chain crosses the membrane as a helical span at residues 459-479 (SVIRWWLLSFGMLAALGGVIF). Over 480–523 (HFKDDIMRIAIKGDSSVTKVNPEDGEQKDVSVIGQSHEPPKINM) the chain is Cytoplasmic. Residues 499 to 523 (VNPEDGEQKDVSVIGQSHEPPKINM) form a disordered region.

It belongs to the CD36 family. Localizes to both male and female antennae but not the leg, wing, gut, head, or thoracic ganglia. Detected throughout the sensory epithelium, associating with both sex-pheromone sensilla and plant-volatile sensilla. Differentially expressed both among different sensilla and different neurons within a given sensillum. Expression coincides with that of several other olfactory-specific proteins that are involved in odor detection.

Its subcellular location is the cell membrane. In terms of biological role, plays an olfactory role that is not restricted to pheromone sensitivity. The sequence is that of Sensory neuron membrane protein 1 from Manduca sexta (Tobacco hawkmoth).